Consider the following 209-residue polypeptide: FMN-dependent NADH:quinone oxidoreductase 2 (209 aa).

Position 17–19 (17–19 (SAS)) interacts with FMN.

The protein belongs to the azoreductase type 1 family. Homodimer. FMN is required as a cofactor.

It carries out the reaction 2 a quinone + NADH + H(+) = 2 a 1,4-benzosemiquinone + NAD(+). It catalyses the reaction N,N-dimethyl-1,4-phenylenediamine + anthranilate + 2 NAD(+) = 2-(4-dimethylaminophenyl)diazenylbenzoate + 2 NADH + 2 H(+). In terms of biological role, quinone reductase that provides resistance to thiol-specific stress caused by electrophilic quinones. Also exhibits azoreductase activity. Catalyzes the reductive cleavage of the azo bond in aromatic azo compounds to the corresponding amines. The protein is FMN-dependent NADH:quinone oxidoreductase 2 of Lactiplantibacillus plantarum (strain ATCC BAA-793 / NCIMB 8826 / WCFS1) (Lactobacillus plantarum).